Consider the following 428-residue polypeptide: Light-independent protochlorophyllide reductase subunit N (428 aa).

The [4Fe-4S] cluster site is built by C31, C56, and C117.

The protein belongs to the BchN/ChlN family. As to quaternary structure, protochlorophyllide reductase is composed of three subunits; BchL, BchN and BchB. Forms a heterotetramer of two BchB and two BchN subunits. It depends on [4Fe-4S] cluster as a cofactor.

The enzyme catalyses chlorophyllide a + oxidized 2[4Fe-4S]-[ferredoxin] + 2 ADP + 2 phosphate = protochlorophyllide a + reduced 2[4Fe-4S]-[ferredoxin] + 2 ATP + 2 H2O. It functions in the pathway porphyrin-containing compound metabolism; bacteriochlorophyll biosynthesis (light-independent). Component of the dark-operative protochlorophyllide reductase (DPOR) that uses Mg-ATP and reduced ferredoxin to reduce ring D of protochlorophyllide (Pchlide) to form chlorophyllide a (Chlide). This reaction is light-independent. The NB-protein (BchN-BchB) is the catalytic component of the complex. In Rhodopseudomonas palustris (strain BisB5), this protein is Light-independent protochlorophyllide reductase subunit N.